The sequence spans 29 residues: Galanin (29 aa).

Thr-29 carries the post-translational modification Threonine amide.

Belongs to the galanin family.

The protein localises to the secreted. In terms of biological role, contracts smooth muscle of the gastrointestinal and genitourinary tract, regulates growth hormone release, modulates insulin release, and may be involved in the control of adrenal secretion. In Gallus gallus (Chicken), this protein is Galanin (GAL).